Reading from the N-terminus, the 143-residue chain is Actinoxanthin (143 aa).

The first 33 residues, 1 to 33, serve as a signal peptide directing secretion; it reads MSLRHMSRRASRFGVVAVASIGLAAAAQSVAFA. Disulfide bonds link C69–C78 and C119–C124.

This sequence belongs to the neocarzinostatin family.

In terms of biological role, binds non-covalently to a chromophore which is the cytotoxic and mutagenic component of the antibiotic. The chromophore binds to DNA as a weak intercalator and causes single- and double-strand breaks. In Streptomyces globisporus, this protein is Actinoxanthin (axnA).